We begin with the raw amino-acid sequence, 334 residues long: Fructose-1,6-bisphosphatase class 1 (334 aa).

4 residues coordinate Mg(2+): E91, D113, L115, and D116. Residues 116–119, N208, and K274 contribute to the substrate site; that span reads DGSS. E280 is a Mg(2+) binding site.

Belongs to the FBPase class 1 family. As to quaternary structure, homotetramer. Mg(2+) is required as a cofactor.

It localises to the cytoplasm. It carries out the reaction beta-D-fructose 1,6-bisphosphate + H2O = beta-D-fructose 6-phosphate + phosphate. The protein operates within carbohydrate biosynthesis; gluconeogenesis. The polypeptide is Fructose-1,6-bisphosphatase class 1 (Janthinobacterium sp. (strain Marseille) (Minibacterium massiliensis)).